The sequence spans 156 residues: ATP synthase subunit b (156 aa).

Residues 11–31 form a helical membrane-spanning segment; that stretch reads AIAFILFVAFCMKYVWPPLMA.

This sequence belongs to the ATPase B chain family. F-type ATPases have 2 components, F(1) - the catalytic core - and F(0) - the membrane proton channel. F(1) has five subunits: alpha(3), beta(3), gamma(1), delta(1), epsilon(1). F(0) has three main subunits: a(1), b(2) and c(10-14). The alpha and beta chains form an alternating ring which encloses part of the gamma chain. F(1) is attached to F(0) by a central stalk formed by the gamma and epsilon chains, while a peripheral stalk is formed by the delta and b chains.

It is found in the cell inner membrane. Functionally, f(1)F(0) ATP synthase produces ATP from ADP in the presence of a proton or sodium gradient. F-type ATPases consist of two structural domains, F(1) containing the extramembraneous catalytic core and F(0) containing the membrane proton channel, linked together by a central stalk and a peripheral stalk. During catalysis, ATP synthesis in the catalytic domain of F(1) is coupled via a rotary mechanism of the central stalk subunits to proton translocation. Component of the F(0) channel, it forms part of the peripheral stalk, linking F(1) to F(0). In Erwinia tasmaniensis (strain DSM 17950 / CFBP 7177 / CIP 109463 / NCPPB 4357 / Et1/99), this protein is ATP synthase subunit b.